The sequence spans 802 residues: Lon protease (802 aa).

Residues L21–I215 form the Lon N-terminal domain. An ATP-binding site is contributed by G367–T374. The 182-residue stretch at E603–R784 folds into the Lon proteolytic domain. Residues S690 and K733 contribute to the active site.

The protein belongs to the peptidase S16 family. As to quaternary structure, homohexamer. Organized in a ring with a central cavity.

It is found in the cytoplasm. The enzyme catalyses Hydrolysis of proteins in presence of ATP.. ATP-dependent serine protease that mediates the selective degradation of mutant and abnormal proteins as well as certain short-lived regulatory proteins. Required for cellular homeostasis and for survival from DNA damage and developmental changes induced by stress. Degrades polypeptides processively to yield small peptide fragments that are 5 to 10 amino acids long. Binds to DNA in a double-stranded, site-specific manner. The polypeptide is Lon protease (Endomicrobium trichonymphae).